The primary structure comprises 398 residues: Subtilisin-like serine protease EN45_076310 (398 aa).

The signal sequence occupies residues methionine 1–alanine 19. A propeptide spans glycine 20–threonine 115 (removed in mature form). Residues serine 35–asparagine 113 enclose the Inhibitor I9 domain. Asparagine 113 carries N-linked (GlcNAc...) asparagine glycosylation. Residues proline 124–lysine 134 are igE-binding. In terms of domain architecture, Peptidase S8 spans serine 125–glutamine 398. Residue aspartate 157 is the Charge relay system of the active site. The tract at residues glycine 163–arginine 170 is igE-binding. A disordered region spans residues threonine 175–threonine 195. The Charge relay system role is filled by histidine 188. The igE-binding stretch occupies residues isoleucine 227–lysine 245. N-linked (GlcNAc...) asparagine glycosylation is present at asparagine 249. The segment at serine 310 to valine 318 is igE-binding. Serine 343 (charge relay system) is an active-site residue.

It belongs to the peptidase S8 family.

It is found in the secreted. With respect to regulation, inhibited by phenylmethanesulfonyl fluoride (PMSF) and diethyl pyrocarbonate (DEPC), but not by benzamidine. Functionally, serine protease that hydrolyzes casein, gelatin and human collagen type IV, but not elastin in vitro. Hydrolyzes OCLN of the human lung epithelial cells at 202-Gln-|-Ser-203 and Gln-211-|-Ile-212. The polypeptide is Subtilisin-like serine protease EN45_076310 (Penicillium chrysogenum (Penicillium notatum)).